Here is a 926-residue protein sequence, read N- to C-terminus: Neurofilament medium polypeptide (926 aa).

Residues 1–10 show a composition bias toward polar residues; it reads MSYTLDSLGN. Disordered regions lie at residues 1–51 and 79–102; these read MSYT…VSSS and QSSS…SNEK. N-acetylserine is present on Ser2. The tract at residues 2 to 104 is head; the sequence is SYTLDSLGNP…KLSRSNEKEQ (103 aa). Residues 21–44 are compositionally biased toward low complexity; sequence RSSFSRISGSPSSGFRSQSWSRGS. Ser30 is subject to Phosphoserine. Arg42 is subject to Omega-N-methylarginine. Thr47 carries an O-linked (GlcNAc) threonine glycan. A Phosphoserine modification is found at Ser99. An IF rod domain is found at 101–412; it reads EKEQIQGLND…KLLEGEETRF (312 aa). A coil 1A region spans residues 105-136; it reads IQGLNDRFAGYIEKVHYLEQQNKEIEAEIQAL. The segment at 137 to 149 is linker 1; that stretch reads RQKQASHAQLGDA. The coil 1B stretch occupies residues 150-248; the sequence is YDQEIRELRA…EEEVADLLAQ (99 aa). Ser226 carries the post-translational modification Phosphoserine. Residues 249 to 265 are linker 12; the sequence is IQASHITVERKDYLKTD. Residues 266–287 form a coil 2A region; sequence ISTALKEIRSQLESHSDQNMHQ. The segment at 288–291 is linker 2; sequence AEEW. Residues 292–412 are coil 2B; sequence FKCRYAKLTE…KLLEGEETRF (121 aa). Tyr320 carries the phosphotyrosine modification. Phosphoserine is present on residues Ser346, Ser418, Ser430, Ser468, and Ser484. The tail stretch occupies residues 413 to 926; the sequence is STFAGSITGP…AIVKEVTQSD (514 aa). A disordered region spans residues 487 to 860; it reads EEVKEEEAEE…EKKGGDKSEE (374 aa). A compositionally biased stretch (acidic residues) spans 490-507; it reads KEEEAEEKEEKEEAEEEV. Repeat 1 spans residues 512 to 516; it reads KSPVK. The tract at residues 512-698 is 17 X 5 AA approximate tandem repeats of K-S-P-[TVEA]-[AKETP]; the sequence is KSPVKATAPE…KSPAPKSPVE (187 aa). Ser513 is modified (phosphoserine). Residues 523-543 show a composition bias toward acidic residues; the sequence is KEEEGEKEEEEGQEEEEEEEE. Positions 544 to 563 are enriched in basic and acidic residues; it reads AAKSDQAEEGGSEKEGSSEK. 4 positions are modified to phosphoserine: Ser547, Ser555, Ser560, and Ser561. Positions 564-584 are enriched in acidic residues; sequence EEGEQEEEGETEAEGEGEEAA. Position 574 is a phosphothreonine (Thr574). Positions 585–619 are enriched in basic and acidic residues; the sequence is AEAKEEKKMEEKAEEVAPKEELAAEAKVEKPEKAK. Tandem repeats lie at residues 619–623, 624–628, 629–633, 634–638, 639–643, 644–648, 649–653, 654–658, 659–663, 664–668, 669–673, 674–678, 679–683, 684–688, 689–693, and 694–698. Position 628 is a phosphothreonine (Thr628). Phosphoserine occurs at positions 630, 635, and 640. Thr647 carries the phosphothreonine modification. A phosphoserine mark is found at Ser650 and Ser655. Ser665 and Ser670 each carry phosphoserine. Positions 673–692 are enriched in low complexity; that stretch reads AKSPTAKSPTAKSPAAKSPA. The residue at position 677 (Thr677) is a Phosphothreonine. Residues Ser680, Ser685, Ser690, Ser695, Ser727, Ser751, Ser757, Ser771, Ser831, and Ser847 each carry the phosphoserine modification. Composition is skewed to basic and acidic residues over residues 696 to 764, 771 to 811, and 826 to 838; these read PVEE…EEVP, SPEK…KEDI, and TKEK…EEKG. The span at 849-860 shows a compositional bias: basic and acidic residues; that stretch reads GDEKKGGDKSEE.

As to quaternary structure, forms heterodimers with NEFL; which can further hetero-oligomerize (in vitro). Forms heterodimers with INA (in vitro). Phosphorylated on a number of serine residues in the repeated K-S-P tripeptide motif. Phosphorylation of NFH may result in the formation of interfilament cross-links that are important in the maintenance of axonal caliber. In terms of processing, phosphorylation seems to play a major role in the functioning of the larger neurofilament polypeptides (NF-M and NF-H), the levels of phosphorylation being altered developmentally and coincidentally with a change in the neurofilament function. Post-translationally, phosphorylated in the head and rod regions by the PKC kinase PKN1, leading to the inhibition of polymerization.

Its subcellular location is the cytoplasm. It is found in the cytoskeleton. The protein resides in the cell projection. The protein localises to the axon. Its function is as follows. Neurofilaments usually contain three intermediate filament proteins: NEFL, NEFM, and NEFH which are involved in the maintenance of neuronal caliber. May additionally cooperate with the neuronal intermediate filament proteins PRPH and INA to form neuronal filamentous networks. The chain is Neurofilament medium polypeptide (NEFM) from Bos taurus (Bovine).